The sequence spans 449 residues: Anthocyanidin 3-O-glucosyltransferase 1 (449 aa).

The Proton acceptor role is filled by His3. His3 provides a ligand contact to an anthocyanidin. Asp103 functions as the Charge relay in the catalytic mechanism. UDP-alpha-D-glucose-binding residues include Thr125, Ala325, Gln327, His342, Trp345, Asn346, Ser347, and Glu350. Ala365 provides a ligand contact to an anthocyanidin. UDP-alpha-D-glucose-binding residues include Glu366 and Gln367.

The protein belongs to the UDP-glycosyltransferase family. As to expression, expressed in cotyledons and roots, but not in leaves.

The enzyme catalyses an anthocyanidin + UDP-alpha-D-glucose + H(+) = an anthocyanidin 3-O-beta-D-glucoside + UDP. It participates in pigment biosynthesis; anthocyanin biosynthesis. Functionally, in the presence of other necessary color factors, this glycosylation reaction allows the accumulation of anthocyanin pigments. In Manihot esculenta (Cassava), this protein is Anthocyanidin 3-O-glucosyltransferase 1 (GT1).